The chain runs to 502 residues: Glycerol kinase (502 aa).

Thr14 contacts ADP. Residues Thr14, Thr15, and Ser16 each contribute to the ATP site. Thr14 contacts sn-glycerol 3-phosphate. Arg18 lines the ADP pocket. The sn-glycerol 3-phosphate site is built by Arg84, Glu85, Tyr136, and Asp246. The glycerol site is built by Arg84, Glu85, Tyr136, Asp246, and Gln247. ADP-binding residues include Thr268 and Gly311. ATP contacts are provided by Thr268, Gly311, Gln315, and Gly412. Residues Gly412 and Asn416 each contribute to the ADP site.

It belongs to the FGGY kinase family. In terms of assembly, homotetramer and homodimer (in equilibrium). Heterodimer with EIIA-Glc. Binds 1 zinc ion per glycerol kinase EIIA-Glc dimer. The zinc ion is important for dimerization.

It catalyses the reaction glycerol + ATP = sn-glycerol 3-phosphate + ADP + H(+). Its pathway is polyol metabolism; glycerol degradation via glycerol kinase pathway; sn-glycerol 3-phosphate from glycerol: step 1/1. With respect to regulation, activity of this regulatory enzyme is affected by several metabolites. Allosterically and non-competitively inhibited by fructose 1,6-bisphosphate (FBP) and unphosphorylated phosphocarrier protein EIIA-Glc (III-Glc), an integral component of the bacterial phosphotransferase (PTS) system. Functionally, key enzyme in the regulation of glycerol uptake and metabolism. Catalyzes the phosphorylation of glycerol to yield sn-glycerol 3-phosphate. This Salmonella typhimurium (strain LT2 / SGSC1412 / ATCC 700720) protein is Glycerol kinase.